Reading from the N-terminus, the 459-residue chain is Glutamate--tRNA ligase 2 (459 aa).

Positions 8–18 (PSPTGYLHIGG) match the 'HIGH' region motif. The 'KMSKS' region signature appears at 237-241 (KLSKR). K240 contacts ATP.

Belongs to the class-I aminoacyl-tRNA synthetase family. Glutamate--tRNA ligase type 1 subfamily. In terms of assembly, monomer.

It localises to the cytoplasm. The enzyme catalyses tRNA(Glu) + L-glutamate + ATP = L-glutamyl-tRNA(Glu) + AMP + diphosphate. Catalyzes the attachment of glutamate to tRNA(Glu) in a two-step reaction: glutamate is first activated by ATP to form Glu-AMP and then transferred to the acceptor end of tRNA(Glu). This chain is Glutamate--tRNA ligase 2, found in Campylobacter concisus (strain 13826).